The following is a 292-amino-acid chain: ATP synthase gamma chain (292 aa).

This sequence belongs to the ATPase gamma chain family. As to quaternary structure, F-type ATPases have 2 components, CF(1) - the catalytic core - and CF(0) - the membrane proton channel. CF(1) has five subunits: alpha(3), beta(3), gamma(1), delta(1), epsilon(1). CF(0) has three main subunits: a, b and c.

The protein resides in the cell inner membrane. Functionally, produces ATP from ADP in the presence of a proton gradient across the membrane. The gamma chain is believed to be important in regulating ATPase activity and the flow of protons through the CF(0) complex. The protein is ATP synthase gamma chain of Nitrobacter winogradskyi (strain ATCC 25391 / DSM 10237 / CIP 104748 / NCIMB 11846 / Nb-255).